A 47-amino-acid polypeptide reads, in one-letter code: Small, acid-soluble spore protein N (47 aa).

2 stretches are compositionally biased toward polar residues: residues 1–11 and 29–47; these read MGNPKSNQQPF and KQMQDQSGQHPQVIQTKGE. The disordered stretch occupies residues 1 to 47; the sequence is MGNPKSNQQPFVPQHIGTKPREAGGNKGKQMQDQSGQHPQVIQTKGE.

The protein belongs to the SspN family.

It localises to the spore core. The polypeptide is Small, acid-soluble spore protein N (Anoxybacillus flavithermus (strain DSM 21510 / WK1)).